Here is a 606-residue protein sequence, read N- to C-terminus: 4-hydroxy-3-methylbut-2-en-1-yl diphosphate synthase (flavodoxin) (606 aa).

The [4Fe-4S] cluster site is built by Cys513, Cys516, Cys547, and Glu554.

It belongs to the IspG family. The cofactor is [4Fe-4S] cluster.

It catalyses the reaction (2E)-4-hydroxy-3-methylbut-2-enyl diphosphate + oxidized [flavodoxin] + H2O + 2 H(+) = 2-C-methyl-D-erythritol 2,4-cyclic diphosphate + reduced [flavodoxin]. Its pathway is isoprenoid biosynthesis; isopentenyl diphosphate biosynthesis via DXP pathway; isopentenyl diphosphate from 1-deoxy-D-xylulose 5-phosphate: step 5/6. In terms of biological role, converts 2C-methyl-D-erythritol 2,4-cyclodiphosphate (ME-2,4cPP) into 1-hydroxy-2-methyl-2-(E)-butenyl 4-diphosphate. In Chlamydia felis (strain Fe/C-56) (Chlamydophila felis), this protein is 4-hydroxy-3-methylbut-2-en-1-yl diphosphate synthase (flavodoxin).